A 584-amino-acid polypeptide reads, in one-letter code: Aspartate--tRNA(Asp/Asn) ligase (584 aa).

Glu-173 lines the L-aspartate pocket. An aspartate region spans residues 197–200; sequence QLFK. Position 219 (Arg-219) interacts with L-aspartate. ATP contacts are provided by residues 219-221 and Gln-228; that span reads RDE. Residue His-446 coordinates L-aspartate. Glu-476 serves as a coordination point for ATP. Arg-483 contacts L-aspartate. ATP is bound at residue 528-531; sequence GLDR.

Belongs to the class-II aminoacyl-tRNA synthetase family. Type 1 subfamily. As to quaternary structure, homodimer.

Its subcellular location is the cytoplasm. It catalyses the reaction tRNA(Asx) + L-aspartate + ATP = L-aspartyl-tRNA(Asx) + AMP + diphosphate. In terms of biological role, aspartyl-tRNA synthetase with relaxed tRNA specificity since it is able to aspartylate not only its cognate tRNA(Asp) but also tRNA(Asn). Reaction proceeds in two steps: L-aspartate is first activated by ATP to form Asp-AMP and then transferred to the acceptor end of tRNA(Asp/Asn). The chain is Aspartate--tRNA(Asp/Asn) ligase from Sulfurovum sp. (strain NBC37-1).